The primary structure comprises 179 residues: Gut granule loss protein 3 (179 aa).

Positions 40–59 are disordered; the sequence is DLDSASSGVGSSTCTEEQES. Polar residues predominate over residues 42-54; it reads DSASSGVGSSTCT.

This chain is Gut granule loss protein 3 (glo-3), found in Caenorhabditis elegans.